Here is a 248-residue protein sequence, read N- to C-terminus: Mannose-binding protein C (248 aa).

The N-terminal stretch at 1-20 (MSPFLSLPLLLLSVLSASYS) is a signal peptide. The interval 36–112 (IACSSPGING…GDSSLAASER (77 aa)) is disordered. The Collagen-like domain occupies 42–99 (GINGFPGKDGRDGTKGEKGEPGQGLRGLQGPPGKLGPPGNPGPSGSPGAKGQKGDPGA). P47 bears the 4-hydroxyproline mark. Positions 49-61 (KDGRDGTKGEKGE) are enriched in basic and acidic residues. 4 positions are modified to 4-hydroxyproline: P73, P79, P82, and P88. The stretch at 112-130 (RKALQTEMARIKKWVTFSL) forms a coiled coil. The 112-residue stretch at 134–245 (VGKKLFLSNG…CSSSHLAICE (112 aa)) folds into the C-type lectin domain. Disulfide bonds link C155–C244 and C222–C236.

As to quaternary structure, oligomeric complex of 3 or more homotrimers. Interacts with MASP1 and MASP2. Interacts with MEP1A and MEP1B and may inhibit their catalytic activity. Hydroxylation on proline residues within the sequence motif, GXPG, is most likely to be 4-hydroxy as this fits the requirement for 4-hydroxylation in vertebrates.

It is found in the secreted. Functionally, calcium-dependent lectin involved in innate immune defense. Binds mannose, fucose and N-acetylglucosamine on different microorganisms and activates the lectin complement pathway. Binds to late apoptotic cells, as well as to apoptotic blebs and to necrotic cells, but not to early apoptotic cells, facilitating their uptake by macrophages. The polypeptide is Mannose-binding protein C (MBL2) (Saguinus oedipus (Cotton-top tamarin)).